Reading from the N-terminus, the 329-residue chain is MPAVQMTGVGGAVPAQVLTNYHLSELVTTSDEWIASRTGIRSRRILAPGQSLTQLAARAATDALSQAGRSPLDVDLLILATSTPDDLFGGAAHLQHEIGAVRAVAFDLTAACSGFVFALATASQFVRTGTYRTVLVVGADALSRYTDWTDRATCVLFGDGAGAALLEAGEVEGILGFELRTDGARAGHLNIHCTAEAVPLAADMAATRARFASITMNGREVYRFAVEAVPDLIEKTLAACGVAPEQVKAYLLHQANQRILDSVASRLHVAPERMASNLADYGNTSSASVPLILQEWVQDGRIRAGDRVVLAGFGAGLSWGVLLARWGRL.

Catalysis depends on residues Cys-112 and His-253. Residues 254–258 (QANQR) are ACP-binding. Asn-283 is an active-site residue.

This sequence belongs to the thiolase-like superfamily. FabH family. In terms of assembly, homodimer.

The protein localises to the cytoplasm. It carries out the reaction malonyl-[ACP] + acetyl-CoA + H(+) = 3-oxobutanoyl-[ACP] + CO2 + CoA. It functions in the pathway lipid metabolism; fatty acid biosynthesis. Its function is as follows. Catalyzes the condensation reaction of fatty acid synthesis by the addition to an acyl acceptor of two carbons from malonyl-ACP. Catalyzes the first condensation reaction which initiates fatty acid synthesis and may therefore play a role in governing the total rate of fatty acid production. Possesses both acetoacetyl-ACP synthase and acetyl transacylase activities. Its substrate specificity determines the biosynthesis of branched-chain and/or straight-chain of fatty acids. In Gloeobacter violaceus (strain ATCC 29082 / PCC 7421), this protein is Beta-ketoacyl-[acyl-carrier-protein] synthase III.